A 199-amino-acid chain; its full sequence is GTP cyclohydrolase-2 (199 aa).

52–56 contacts GTP; that stretch reads RMHSE. Cys-57, Cys-68, and Cys-70 together coordinate Zn(2+). GTP contacts are provided by residues Gln-73, 94–96, and Thr-116; that span reads EGR. Asp-128 (proton acceptor) is an active-site residue. Residue Arg-130 is the Nucleophile of the active site. GTP is bound by residues Thr-151 and Lys-156.

The protein belongs to the GTP cyclohydrolase II family. Zn(2+) is required as a cofactor.

It catalyses the reaction GTP + 4 H2O = 2,5-diamino-6-hydroxy-4-(5-phosphoribosylamino)-pyrimidine + formate + 2 phosphate + 3 H(+). The protein operates within cofactor biosynthesis; riboflavin biosynthesis; 5-amino-6-(D-ribitylamino)uracil from GTP: step 1/4. Its function is as follows. Catalyzes the conversion of GTP to 2,5-diamino-6-ribosylamino-4(3H)-pyrimidinone 5'-phosphate (DARP), formate and pyrophosphate. In Aliivibrio fischeri (strain MJ11) (Vibrio fischeri), this protein is GTP cyclohydrolase-2.